We begin with the raw amino-acid sequence, 41 residues long: Large ribosomal subunit protein bL36 (41 aa).

It belongs to the bacterial ribosomal protein bL36 family.

This Azorhizobium caulinodans (strain ATCC 43989 / DSM 5975 / JCM 20966 / LMG 6465 / NBRC 14845 / NCIMB 13405 / ORS 571) protein is Large ribosomal subunit protein bL36.